Here is a 494-residue protein sequence, read N- to C-terminus: Homeotic protein bicoid (494 aa).

3 disordered regions span residues 1-49 (MAQP…PPQF), 149-210 (RRRH…TAHM), and 263-293 (QQVHNHQQQLHHQGNHVPHQMQQQQQQAQQQ). Basic residues predominate over residues 14 to 40 (PLPHTHTHPHPHSHPHPHSHPHPHHQH). Residues 97–156 (PRRTRTTFTSSQIAELEQHFLQGRYLTAPRLADLSAKLALGTAQVKIWFKNRRRRHKIQS) constitute a DNA-binding region (homeobox). Residues 154 to 163 (IQSDQHKDQS) are compositionally biased toward basic and acidic residues. Residues 433 to 440 (RGAAFAKF) are RNA-binding.

Belongs to the paired homeobox family. Bicoid subfamily. In terms of assembly, interacts with Bin1; in vitro and yeast cells. Interacts with bin3. In terms of tissue distribution, maternal expression is an anterior cap concentrated in the cortical cytoplasm. Its transcript is produced maternally and sequestered near the anterior pole of the mature oocyte. After egg deposition, it is translated into protein, which diffuses toward the posterior, forming a long-range anterior gradient.

Its subcellular location is the nucleus. Functionally, segment polarity transcription factor that provides positional cues for the development of head and thoracic segments. Forms a protein concentration gradient that patterns the anterior-posterior axis during embryogenesis and promotes the expression of anterior gap genes, such as hunchback (hb), ocelliless (oc), and buttonhead (btd). Binds to regulatory DNA sequences containing a 5'-TAATCC-3' sequence motif. Also binds RNA. Interacts with Bin1 to repress transcription of bicoid target genes in the anterior tip of the embryo; a process known as retraction. This chain is Homeotic protein bicoid, found in Drosophila melanogaster (Fruit fly).